The chain runs to 138 residues: Ribulose bisphosphate carboxylase small subunit (138 aa).

It belongs to the RuBisCO small chain family. In terms of assembly, heterohexadecamer of 8 large and 8 small subunits.

Its subcellular location is the plastid. It is found in the chloroplast. RuBisCO catalyzes two reactions: the carboxylation of D-ribulose 1,5-bisphosphate, the primary event in carbon dioxide fixation, as well as the oxidative fragmentation of the pentose substrate in the photorespiration process. Both reactions occur simultaneously and in competition at the same active site. Although the small subunit is not catalytic it is essential for maximal activity. This is Ribulose bisphosphate carboxylase small subunit from Pyropia dentata (Red alga).